The sequence spans 362 residues: Holliday junction branch migration complex subunit RuvB (362 aa).

A large ATPase domain (RuvB-L) region spans residues 4-186 (PDRPQRLVEQ…FGIPLRMQFY (183 aa)). ATP-binding positions include I25, R26, G67, K70, T71, T72, 133-135 (EDF), R176, Y186, and R223. T71 contributes to the Mg(2+) binding site. A small ATPAse domain (RuvB-S) region spans residues 187–257 (EPEELQLIVA…AAGGALTRLE (71 aa)). Positions 260–362 (RLGFDAMDRR…GTPEGEGEDV (103 aa)) are head domain (RuvB-H). DNA contacts are provided by R296, R315, and R320.

The protein belongs to the RuvB family. As to quaternary structure, homohexamer. Forms an RuvA(8)-RuvB(12)-Holliday junction (HJ) complex. HJ DNA is sandwiched between 2 RuvA tetramers; dsDNA enters through RuvA and exits via RuvB. An RuvB hexamer assembles on each DNA strand where it exits the tetramer. Each RuvB hexamer is contacted by two RuvA subunits (via domain III) on 2 adjacent RuvB subunits; this complex drives branch migration. In the full resolvosome a probable DNA-RuvA(4)-RuvB(12)-RuvC(2) complex forms which resolves the HJ.

The protein resides in the cytoplasm. It carries out the reaction ATP + H2O = ADP + phosphate + H(+). In terms of biological role, the RuvA-RuvB-RuvC complex processes Holliday junction (HJ) DNA during genetic recombination and DNA repair, while the RuvA-RuvB complex plays an important role in the rescue of blocked DNA replication forks via replication fork reversal (RFR). RuvA specifically binds to HJ cruciform DNA, conferring on it an open structure. The RuvB hexamer acts as an ATP-dependent pump, pulling dsDNA into and through the RuvAB complex. RuvB forms 2 homohexamers on either side of HJ DNA bound by 1 or 2 RuvA tetramers; 4 subunits per hexamer contact DNA at a time. Coordinated motions by a converter formed by DNA-disengaged RuvB subunits stimulates ATP hydrolysis and nucleotide exchange. Immobilization of the converter enables RuvB to convert the ATP-contained energy into a lever motion, pulling 2 nucleotides of DNA out of the RuvA tetramer per ATP hydrolyzed, thus driving DNA branch migration. The RuvB motors rotate together with the DNA substrate, which together with the progressing nucleotide cycle form the mechanistic basis for DNA recombination by continuous HJ branch migration. Branch migration allows RuvC to scan DNA until it finds its consensus sequence, where it cleaves and resolves cruciform DNA. The sequence is that of Holliday junction branch migration complex subunit RuvB from Rhodospirillum centenum (strain ATCC 51521 / SW).